Consider the following 554-residue polypeptide: Solute carrier family 22 member 1 (554 aa).

Residues 1–21 (MPTVDDVLEQVGEFGWFQKRT) are Cytoplasmic-facing. A helical membrane pass occupies residues 22 to 42 (FLFLCLISAILAPIYLGIVFL). At 43 to 149 (GFTPDHRCRS…LVCADAWKVD (107 aa)) the chain is on the extracellular side. Asn71 carries an N-linked (GlcNAc...) asparagine glycan. A helical membrane pass occupies residues 150–170 (LFQSCVNLGFFLGSLGVGYIA). The Cytoplasmic segment spans residues 171 to 176 (DRFGRK). Residues 177 to 197 (LCLLLTTLINAVSGVLTAVAP) form a helical membrane-spanning segment. Over 198–206 (DYTSMLLFR) the chain is Extracellular. A helical transmembrane segment spans residues 207–229 (LLQGLVSKGSWMSGYTLITEFVG). At 230 to 237 (SGYRRTVA) the chain is on the cytoplasmic side. The helical transmembrane segment at 238-258 (ILYQVAFSVGLVALSGVAYAI) threads the bilayer. The Extracellular segment spans residues 259–262 (PNWR). Residues 263 to 283 (WLQLTVSLPTFLCLFYYWCVP) form a helical membrane-spanning segment. The Proline-rich sequence motif lies at 283-287 (PESPR). Over 284–347 (ESPRWLLSQK…FRTPNLRKHT (64 aa)) the chain is Cytoplasmic. Ser333 is subject to Phosphoserine. A helical transmembrane segment spans residues 348–368 (FILMFLWFTCSVLYQGLILHM). At 369-374 (GATGGN) the chain is on the extracellular side. A helical membrane pass occupies residues 375 to 395 (VYLDFFYSSLVEFPAAFVILV). Topologically, residues 396–402 (TIDRVGR) are cytoplasmic. A helical membrane pass occupies residues 403–423 (IYPMAASNLAAGVASVILIFV). The Extracellular segment spans residues 424–431 (PQDLHWLT). A helical membrane pass occupies residues 432-452 (IVLSCVGRMGATIVLQMICLV). The Cytoplasmic segment spans residues 453–464 (NAELYPTFVRNL). The chain crosses the membrane as a helical span at residues 465–485 (GVMVCSALCDVGGIITPFMVF). The Extracellular portion of the chain corresponds to 486 to 492 (RLMEVWQ). The helical transmembrane segment at 493-513 (PLPLIVFGVLGLLAGGMTLLL) threads the bilayer. The Cytoplasmic portion of the chain corresponds to 514 to 554 (PETKGVALPETIEDAENLRRKAKPKESKIYLQVQTSELKGP).

It belongs to the major facilitator (TC 2.A.1) superfamily. Organic cation transporter (TC 2.A.1.19) family. Phosphorylated. In terms of tissue distribution, expressed in kidney, liver and intestine.

It localises to the basolateral cell membrane. Its subcellular location is the apical cell membrane. The protein localises to the lateral cell membrane. It is found in the basal cell membrane. The enzyme catalyses 1-methylnicotinamide(out) = 1-methylnicotinamide(in). It catalyses the reaction dopamine(out) = dopamine(in). The catalysed reaction is serotonin(out) = serotonin(in). It carries out the reaction (R)-adrenaline(out) = (R)-adrenaline(in). The enzyme catalyses (R)-noradrenaline(out) = (R)-noradrenaline(in). It catalyses the reaction histamine(out) = histamine(in). The catalysed reaction is guanidine(out) = guanidine(in). It carries out the reaction choline(out) = choline(in). The enzyme catalyses acetylcholine(in) = acetylcholine(out). It catalyses the reaction thiamine(in) = thiamine(out). The catalysed reaction is spermidine(in) = spermidine(out). It carries out the reaction agmatine(out) = agmatine(in). The enzyme catalyses putrescine(out) = putrescine(in). It catalyses the reaction (R)-carnitine(in) = (R)-carnitine(out). The catalysed reaction is O-isobutanoyl-(R)-carnitine(in) = O-isobutanoyl-(R)-carnitine(out). It carries out the reaction O-acetyl-(R)-carnitine(in) = O-acetyl-(R)-carnitine(out). The enzyme catalyses O-3-hydroxybutanoyl-(R)-carnitine(in) = O-3-hydroxybutanoyl-(R)-carnitine(out). It catalyses the reaction O-propanoyl-(R)-carnitine(in) = O-propanoyl-(R)-carnitine(out). The catalysed reaction is O-butanoyl-(R)-carnitine(in) = O-butanoyl-(R)-carnitine(out). It carries out the reaction O-2-methylbutanoyl-(R)-carnitine(in) = O-2-methylbutanoyl-(R)-carnitine(out). The enzyme catalyses O-3-methylbutanoyl-(R)-carnitine(in) = O-3-methylbutanoyl-(R)-carnitine(out). It catalyses the reaction O-hexanoyl-(R)-carnitine(in) = O-hexanoyl-(R)-carnitine(out). The catalysed reaction is L-histidyl-L-proline diketopiperazine(in) = L-histidyl-L-proline diketopiperazine(out). It carries out the reaction (R)-salsolinol(in) = (R)-salsolinol(out). The enzyme catalyses prostaglandin F2alpha(out) = prostaglandin F2alpha(in). It catalyses the reaction prostaglandin E2(out) = prostaglandin E2(in). Phosphorylation of the transporter leads to changes in its substrate affinity, resulting in a regulation of the transport activity. In contrast with rat ortholog, ASP uptake is inhibited by protein kinase A (PKA) and C (PKC) activation. ASP uptake is also endogenously activated by calmodulin, the calmodulin-dependent kinase II and LCK tyrosine kinase. Inhibited by cGMP, most likely through a cGMP-binding protein that interacts with OCT1. Functionally, electrogenic voltage-dependent transporter that mediates the transport of a variety of organic cations such as endogenous bioactive amines, cationic drugs and xenobiotics. Functions as a pH- and Na(+)-independent, bidirectional transporter. Cation cellular uptake or release is driven by the electrochemical potential (i.e. membrane potential and concentration gradient) and substrate selectivity. Hydrophobicity is a major requirement for recognition in polyvalent substrates and inhibitors. Primarily expressed in the basolateral membrane of hepatocytes and proximal tubules and involved in the uptake and disposition of cationic compounds from the blood by hepatic and renal clearance. Most likely functions as an uptake carrier in enterocytes contributing to the intestinal elimination of organic cations from the systemic circulation. Transports endogenous monoamines such as N-1-methylnicotinamide (NMN), guanidine, neurotransmitters dopamine, serotonin, noradrenaline, adrenaline and histamine, and quaternary ammonium compound such as choline. Also transports natural polyamines such as spermidine, agmatine and putrescine at low affinity, but relatively high turnover. Involved in the hepatic and intestinal uptake of the vitamin B1/thiamine, hence regulating hepatic lipid and energy metabolism. Contributes to the influx and efflux of fatty acid carriers carnitines and acylcarnitines across the basolateral membrane of hepatocytes, from the liver to the systemic circulation and inversely and may be involved in regulating the systemic availability of hepatic acylcarnitines. Also capable of transporting non-amine endogenous compounds such as prostaglandin E2 (PGE2) and prostaglandin F2-alpha (PGF2-alpha). May contribute to the transport of cationic compounds in testes across the blood-testis-barrier. Also mediates the uptake of xenobiotics tributylmethylammonium (TBuMA), quinidine, N-methyl-quinine (NMQ), N-methyl-quinidine (NMQD) N-(4,4-azo-n-pentyl)-quinuclidine (APQ), azidoprocainamide methoiodide (AMP), N-(4,4-azo-n-pentyl)-21-deoxyajmalinium (APDA) and 4-(4-(dimethylamino)styryl)-N-methylpyridinium (ASP). This Oryctolagus cuniculus (Rabbit) protein is Solute carrier family 22 member 1 (SLC22A1).